Consider the following 412-residue polypeptide: Phosphoglycerate kinase (412 aa).

Residues valine 20, aspartate 21, phenylalanine 22, asparagine 23, glutamine 35, arginine 36, serine 59, histidine 60, glycine 62, arginine 63, leucine 118, arginine 119, histidine 166, and arginine 167 each coordinate (2R)-3-phosphoglycerate. Glycine 210 provides a ligand contact to ADP. Residue glycine 210 participates in CDP binding. The AMP site is built by alanine 211 and lysine 212. Alanine 211 lines the ATP pocket. A Mg(2+)-binding site is contributed by alanine 211. Positions 214 and 215 each coordinate Mg(2+). Residue aspartate 215 participates in CDP binding. Position 216 (lysine 216) interacts with AMP. Lysine 216 lines the ATP pocket. Glycine 234 serves as a coordination point for ADP. A CDP-binding site is contributed by glycine 234. Glycine 235 and glycine 308 together coordinate AMP. ATP is bound by residues glycine 235 and glycine 308. 2 residues coordinate CDP: glycine 333 and phenylalanine 338. Residue phenylalanine 338 coordinates ADP. Residue glutamate 339 participates in AMP binding. 3 residues coordinate ATP: glutamate 339, aspartate 370, and threonine 371. Residue aspartate 370 participates in Mg(2+) binding.

This sequence belongs to the phosphoglycerate kinase family. Monomer. Mg(2+) serves as cofactor.

Its subcellular location is the cytoplasm. It carries out the reaction (2R)-3-phosphoglycerate + ATP = (2R)-3-phospho-glyceroyl phosphate + ADP. Its pathway is carbohydrate degradation; glycolysis; pyruvate from D-glyceraldehyde 3-phosphate: step 2/5. Functionally, catalyzes one of the two ATP producing reactions in the glycolytic pathway via the reversible conversion of 1,3-diphosphoglycerate to 3-phosphoglycerate. In addition to its role as a glycolytic enzyme, it seems that PGK-1 acts as a polymerase alpha cofactor protein (primer recognition protein). May play a role in sperm motility. This Aplysia californica (California sea hare) protein is Phosphoglycerate kinase (PGK).